Reading from the N-terminus, the 351-residue chain is Protein RecA (351 aa).

73–80 contributes to the ATP binding site; sequence GPESSGKT.

It belongs to the RecA family.

It localises to the cytoplasm. Its function is as follows. Can catalyze the hydrolysis of ATP in the presence of single-stranded DNA, the ATP-dependent uptake of single-stranded DNA by duplex DNA, and the ATP-dependent hybridization of homologous single-stranded DNAs. It interacts with LexA causing its activation and leading to its autocatalytic cleavage. In Oleidesulfovibrio alaskensis (strain ATCC BAA-1058 / DSM 17464 / G20) (Desulfovibrio alaskensis), this protein is Protein RecA.